We begin with the raw amino-acid sequence, 227 residues long: Flagellar L-ring protein (227 aa).

The first 16 residues, 1–16, serve as a signal peptide directing secretion; that stretch reads MRNIILFAAGTLLLSG. Cys-17 carries N-palmitoyl cysteine lipidation. Residue Cys-17 is the site of S-diacylglycerol cysteine attachment.

It belongs to the FlgH family. The basal body constitutes a major portion of the flagellar organelle and consists of four rings (L,P,S, and M) mounted on a central rod.

The protein localises to the cell outer membrane. The protein resides in the bacterial flagellum basal body. Its function is as follows. Assembles around the rod to form the L-ring and probably protects the motor/basal body from shearing forces during rotation. This is Flagellar L-ring protein from Pseudoalteromonas translucida (strain TAC 125).